Consider the following 1292-residue polypeptide: Epidermal growth factor receptor (1292 aa).

The Extracellular portion of the chain corresponds to 1-641 (MYNNYNLCHI…AGLIENELQP (641 aa)). Asn-31, Asn-224, Asn-263, Asn-323, Asn-342, Asn-600, and Asn-605 each carry an N-linked (GlcNAc...) asparagine glycan. The helical transmembrane segment at 642-662 (AILAGVAVFALAFLVVAAIIM) threads the bilayer. The Cytoplasmic portion of the chain corresponds to 663 to 1292 (YFWRVRAKAK…KPLRKNETTV (630 aa)). Phosphothreonine; by PKC is present on Thr-675. A Protein kinase domain is found at 711 to 978 (MRKGGILGYG…KMSRDPGRYL (268 aa)). Residues 717-725 (LGYGAFGNV) and Lys-744 each bind ATP. The active-site Proton acceptor is Asp-836. Residues 1022–1066 (PKSRAPIPPGLSASSTSGSPPNTPVKPCWPNGKPLAADSPTPQNQ) are disordered. Tyr-1166 bears the Phosphotyrosine; by autocatalysis mark. The tract at residues 1253-1292 (SQVRQRSSEEESDHEYYNDFDRLERELQPLKPLRKNETTV) is disordered. Over residues 1258–1292 (RSSEEESDHEYYNDFDRLERELQPLKPLRKNETTV) the composition is skewed to basic and acidic residues.

It belongs to the protein kinase superfamily. Tyr protein kinase family. EGF receptor subfamily.

It is found in the membrane. The enzyme catalyses L-tyrosyl-[protein] + ATP = O-phospho-L-tyrosyl-[protein] + ADP + H(+). With respect to regulation, activated by MRJP1 during queen determination of honeybee larvae. Functionally, upon binding to its ligands, transduces the signal through the ras-raf-MAPK pathway and is involved in a myriad of developmental decisions. Involved in the determination of adult size, ovary development, and development timing, especially during queen determination of honeybee larvae. May have an important role in the prolongation of longevity in queens. The chain is Epidermal growth factor receptor (Egfr) from Apis mellifera (Honeybee).